We begin with the raw amino-acid sequence, 225 residues long: MVQSCSAYGCKNRYDKDKPISFHKFPLKRPLLCRKWEAAVRRADFKPTKYSSICSDHFTADCFKRECNNKLLKDNAVPTIFAHTEIKKKSGKAVKKEQLPAEPEPVPSVPEVDPAIGLLLPPLYTPSHIAVICDHNYTVEDTVHQRRRIQQLEEQVDKLRKKLKIANQKCRRQERSLEKLEREVSEYREAKGSGYVIFPGNYYEVLNENEYKELAPEITYKEIIL.

A THAP-type zinc finger spans residues 5–57 (CSAYGCKNRYDKDKPISFHKFPLKRPLLCRKWEAAVRRADFKPTKYSSICSDH). The stretch at 139-194 (VEDTVHQRRRIQQLEEQVDKLRKKLKIANQKCRRQERSLEKLEREVSEYREAKGSG) forms a coiled coil.

This sequence belongs to the THAP1 family.

The protein resides in the nucleus. It is found in the nucleoplasm. In terms of biological role, DNA-binding transcription regulator that regulates endothelial cell proliferation and G1/S cell-cycle progression. Specifically binds the 5'-[AT]NTNN[GT]GGCA[AGT]-3' core DNA sequence and acts by modulating expression of pRB-E2F cell-cycle target genes. The protein is THAP domain-containing protein 1 (thap1) of Xenopus tropicalis (Western clawed frog).